Here is a 461-residue protein sequence, read N- to C-terminus: Acetylornithine aminotransferase, mitochondrial (461 aa).

The disordered stretch occupies residues 36-56 (YATASQLTHPDPTEDSPSGKM). The residue at position 312 (Lys312) is an N6-(pyridoxal phosphate)lysine.

The protein belongs to the class-III pyridoxal-phosphate-dependent aminotransferase family. The cofactor is pyridoxal 5'-phosphate.

It is found in the mitochondrion matrix. The enzyme catalyses N(2)-acetyl-L-ornithine + 2-oxoglutarate = N-acetyl-L-glutamate 5-semialdehyde + L-glutamate. It participates in amino-acid biosynthesis; L-arginine biosynthesis; N(2)-acetyl-L-ornithine from L-glutamate: step 4/4. The polypeptide is Acetylornithine aminotransferase, mitochondrial (arg-8) (Neurospora crassa (strain ATCC 24698 / 74-OR23-1A / CBS 708.71 / DSM 1257 / FGSC 987)).